The chain runs to 275 residues: Replication protein A 32 kDa subunit (275 aa).

The segment at 23 to 47 (MQSPGGFGSPAPTQGEKKSRSRSQQ) is disordered. Residues 76–150 (VTIVGIVRHA…KSVVAFKIAP (75 aa)) constitute a DNA-binding region (OB).

Belongs to the replication factor A protein 2 family. In terms of assembly, component of the replication protein A complex (RPA/RP-A), a heterotrimeric complex composed of RPA1, RPA2 and RPA3. Post-translationally, differentially phosphorylated throughout the cell cycle, becoming phosphorylated at the G1-S transition and dephosphorylated in late mitosis. Phosphorylation increases upon replication fork stalling.

It is found in the nucleus. The protein resides in the PML body. Its function is as follows. As part of the heterotrimeric replication protein A complex (RPA/RP-A), binds and stabilizes single-stranded DNA intermediates, that form during DNA replication or upon DNA stress. It prevents their reannealing and in parallel, recruits and activates different proteins and complexes involved in DNA metabolism. Thereby, it plays an essential role both in DNA replication and the cellular response to DNA damage. This Xenopus tropicalis (Western clawed frog) protein is Replication protein A 32 kDa subunit (rpa2).